We begin with the raw amino-acid sequence, 1450 residues long: DNA-directed RNA polymerase RPB1 homolog (1450 aa).

Belongs to the RNA polymerase beta' chain family. As to quaternary structure, part of the viral DNA-directed RNA polymerase that consists of 8 polII-like subunits (RPB1, RPB2, RPB3, RPB5, RPB6, RPB7, RPB9, RPB10), a capping enzyme and a termination factor.

It is found in the virion. It carries out the reaction RNA(n) + a ribonucleoside 5'-triphosphate = RNA(n+1) + diphosphate. Its function is as follows. Catalytic component of the DNA-directed RNA polymerase (RNAP) that catalyzes the transcription in the cytoplasm of viral DNA into RNA using the four ribonucleoside triphosphates as substrates. Forms the polymerase active center together with RPB2. Part of the core element with the central large cleft, the clamp element that moves to open and close the cleft and the jaws that are thought to grab the incoming DNA template. The polypeptide is DNA-directed RNA polymerase RPB1 homolog (Ornithodoros (relapsing fever ticks)).